The primary structure comprises 747 residues: Protein O-mannosyl-transferase 1 (747 aa).

A run of 9 helical transmembrane segments spans residues 8–28 (PVVV…MGLL), 40–60 (VVFD…QIFF), 68–88 (FGHM…NFLW), 99–119 (VPVW…VPMA), 122–142 (IVLE…LMLI), 154–174 (LLES…LKFF), 183–203 (SLSW…AVGI), 206–226 (MGVF…WHLL), and 269–289 (LLVI…ILVF). 3 MIR domains span residues 318 to 381 (PLEV…VKDP), 392 to 449 (PRPV…LEIV), and 453 to 513 (SDTD…VEEH). N-linked (GlcNAc...) asparagine glycosylation is found at Asn-435, Asn-471, and Asn-539. 3 helical membrane-spanning segments follow: residues 597-617 (IVIW…SLWY), 636-656 (WVLA…PFFL), and 661-681 (LFLY…PVVL).

It belongs to the glycosyltransferase 39 family. In terms of assembly, interacts with POMT2. In terms of tissue distribution, widely expressed. Highly expressed in testis, heart and pancreas. Detected at lower levels in kidney, skeletal muscle, brain, placenta, lung and liver.

The protein resides in the endoplasmic reticulum membrane. It catalyses the reaction a di-trans,poly-cis-dolichyl beta-D-mannosyl phosphate + L-seryl-[protein] = 3-O-(alpha-D-mannosyl)-L-seryl-[protein] + a di-trans,poly-cis-dolichyl phosphate + H(+). The catalysed reaction is a di-trans,poly-cis-dolichyl beta-D-mannosyl phosphate + L-threonyl-[protein] = 3-O-(alpha-D-mannosyl)-L-threonyl-[protein] + a di-trans,poly-cis-dolichyl phosphate + H(+). It functions in the pathway protein modification; protein glycosylation. Its activity is regulated as follows. Slightly activated by Mg(2+) and inhibited by both Ca(+) and Mn(2+). EDTA ha no effect on activity in vitro. In terms of biological role, transfers mannosyl residues to the hydroxyl group of serine or threonine residues. Coexpression of both POMT1 and POMT2 is necessary for enzyme activity, expression of either POMT1 or POMT2 alone is insufficient. Essentially dedicated to O-mannosylation of alpha-DAG1 and few other proteins but not of cadherins and protocaherins. The protein is Protein O-mannosyl-transferase 1 (POMT1) of Homo sapiens (Human).